The primary structure comprises 54 residues: UPF0391 membrane protein BAV1230 (54 aa).

Helical transmembrane passes span 5–25 (AAVFFVIALIAAVLGFGGIAA) and 27–47 (AAGIAKILFFVFLVLALLSVL).

This sequence belongs to the UPF0391 family.

It localises to the cell membrane. This chain is UPF0391 membrane protein BAV1230, found in Bordetella avium (strain 197N).